The chain runs to 844 residues: Eukaryotic translation elongation factor 2 (844 aa).

Residues 17–348 (RNIRNMSVIA…MIAIHLPSPV (332 aa)) enclose the tr-type G domain. 26 to 33 (AHVDHGKS) provides a ligand contact to GTP. Phosphothreonine is present on residues threonine 57 and threonine 59. GTP is bound by residues 162–165 (NKMD) and 219–221 (SGL). Diphthamide is present on histidine 701.

It belongs to the TRAFAC class translation factor GTPase superfamily. Classic translation factor GTPase family. EF-G/EF-2 subfamily. Post-translationally, phosphorylation by EF-2 kinase completely inactivates eEF2.

The protein localises to the cytoplasm. The enzyme catalyses GTP + H2O = GDP + phosphate + H(+). Catalyzes the GTP-dependent ribosomal translocation step during translation elongation. During this step, the ribosome changes from the pre-translocational (PRE) to the post-translocational (POST) state as the newly formed A-site-bound peptidyl-tRNA and P-site-bound deacylated tRNA move to the P and E sites, respectively. Catalyzes the coordinated movement of the two tRNA molecules, the mRNA and conformational changes in the ribosome. The chain is Eukaryotic translation elongation factor 2 from Drosophila melanogaster (Fruit fly).